The primary structure comprises 183 residues: Transcription termination/antitermination protein NusG (183 aa).

A KOW domain is found at 131–161 (PGEEVRVTEGPFADFNGTVEEVDYEKGRLKV).

This sequence belongs to the NusG family.

In terms of biological role, participates in transcription elongation, termination and antitermination. In Pasteurella multocida (strain Pm70), this protein is Transcription termination/antitermination protein NusG.